The sequence spans 519 residues: UPF0053 protein bbp_300 (519 aa).

7 helical membrane-spanning segments follow: residues 13–35, 48–70, 80–102, 123–145, 150–172, 185–207, and 212–231; these read LLTLIILEIVLGIDNLVFVAILS, LIGLSFALFMRLGLLALMSWMVT, YFSFSGRDLILLFGGLFLLFKAT, AGFWTIVIQIVILDSIFSLDAII, TINNLPIMMIAVVIAMVLMLIAS, VVVLCLSFLLMIGCNLVSEALGF, and GYLYAAIGFSIIIEIFNQIA. CBS domains follow at residues 311 to 373 and 374 to 434; these read MTPR…IIDF and SSTT…DADE.

Belongs to the UPF0053 family.

The protein localises to the cell membrane. The sequence is that of UPF0053 protein bbp_300 from Buchnera aphidicola subsp. Baizongia pistaciae (strain Bp).